We begin with the raw amino-acid sequence, 558 residues long: Glucose-6-phosphate isomerase (558 aa).

Glutamate 363 serves as the catalytic Proton donor. Residues histidine 394 and lysine 522 contribute to the active site.

The protein belongs to the GPI family.

It localises to the cytoplasm. The catalysed reaction is alpha-D-glucose 6-phosphate = beta-D-fructose 6-phosphate. It participates in carbohydrate biosynthesis; gluconeogenesis. The protein operates within carbohydrate degradation; glycolysis; D-glyceraldehyde 3-phosphate and glycerone phosphate from D-glucose: step 2/4. Functionally, catalyzes the reversible isomerization of glucose-6-phosphate to fructose-6-phosphate. This Blochmanniella floridana protein is Glucose-6-phosphate isomerase.